Reading from the N-terminus, the 234-residue chain is Leucyl/phenylalanyl-tRNA--protein transferase (234 aa).

It belongs to the L/F-transferase family.

It is found in the cytoplasm. The enzyme catalyses N-terminal L-lysyl-[protein] + L-leucyl-tRNA(Leu) = N-terminal L-leucyl-L-lysyl-[protein] + tRNA(Leu) + H(+). The catalysed reaction is N-terminal L-arginyl-[protein] + L-leucyl-tRNA(Leu) = N-terminal L-leucyl-L-arginyl-[protein] + tRNA(Leu) + H(+). It catalyses the reaction L-phenylalanyl-tRNA(Phe) + an N-terminal L-alpha-aminoacyl-[protein] = an N-terminal L-phenylalanyl-L-alpha-aminoacyl-[protein] + tRNA(Phe). In terms of biological role, functions in the N-end rule pathway of protein degradation where it conjugates Leu, Phe and, less efficiently, Met from aminoacyl-tRNAs to the N-termini of proteins containing an N-terminal arginine or lysine. This is Leucyl/phenylalanyl-tRNA--protein transferase from Escherichia coli O157:H7 (strain EC4115 / EHEC).